We begin with the raw amino-acid sequence, 133 residues long: Transcription antitermination protein NusB (133 aa).

Belongs to the NusB family.

Functionally, involved in transcription antitermination. Required for transcription of ribosomal RNA (rRNA) genes. Binds specifically to the boxA antiterminator sequence of the ribosomal RNA (rrn) operons. This is Transcription antitermination protein NusB from Shouchella clausii (strain KSM-K16) (Alkalihalobacillus clausii).